The chain runs to 59 residues: UPF0391 membrane protein LPC_1949 (59 aa).

Helical transmembrane passes span 5-25 (ALIF…GIAV) and 30-50 (IAKI…IMGL).

The protein belongs to the UPF0391 family.

Its subcellular location is the cell membrane. In Legionella pneumophila (strain Corby), this protein is UPF0391 membrane protein LPC_1949.